We begin with the raw amino-acid sequence, 149 residues long: MADQLTEEQIAEFKEAFSLFDKDGDGTITTKELGTVMRSLGQNPTEAELQDMINEVDADGNGTIDFPEFLTMMARKMKDTDSEEEIIEAFKVFDKDGNGFISAAELRHIMTNLGEKLTDEEVDEMIREADIDGDGQINYEEFVKMMMAK.

At alanine 2 the chain carries N-acetylalanine. EF-hand domains lie at 8-43 (EQIA…LGQN), 44-79 (PTEA…KMKD), 81-116 (DSEE…LGEK), and 117-149 (LTDE…MMAK). Ca(2+) contacts are provided by aspartate 21, aspartate 23, aspartate 25, threonine 27, glutamate 32, aspartate 57, aspartate 59, asparagine 61, threonine 63, glutamate 68, aspartate 94, aspartate 96, asparagine 98, and glutamate 105. An N6,N6,N6-trimethyllysine modification is found at lysine 116. 5 residues coordinate Ca(2+): aspartate 130, aspartate 132, aspartate 134, glutamine 136, and glutamate 141.

The protein belongs to the calmodulin family.

In terms of biological role, calmodulin mediates the control of a large number of enzymes, ion channels and other proteins by Ca(2+). Among the enzymes to be stimulated by the calmodulin-Ca(2+) complex are a number of protein kinases and phosphatases. The polypeptide is Calmodulin (Macrocystis pyrifera (Giant kelp)).